We begin with the raw amino-acid sequence, 437 residues long: 26S proteasome subunit RPT4 (437 aa).

Positions 1–51 (MSEEQDPLLAGLGETSGDNHTQQSHEQQPEQPQETEEHHEEEPSRVDPEQE) are disordered. At Ser-2 the chain carries N-acetylserine. Positions 20–32 (HTQQSHEQQPEQP) are enriched in low complexity. Positions 35–51 (TEEHHEEEPSRVDPEQE) are enriched in basic and acidic residues. 222-229 (GPPGTGKT) is an ATP binding site.

This sequence belongs to the AAA ATPase family. In terms of processing, N-acetylated by NAT1.

Functionally, the 26S proteasome is involved in the ATP-dependent degradation of ubiquitinated proteins. The regulatory (or ATPase) complex confers ATP dependency and substrate specificity to the 26S complex. This is 26S proteasome subunit RPT4 (RPT4) from Saccharomyces cerevisiae (strain ATCC 204508 / S288c) (Baker's yeast).